Consider the following 134-residue polypeptide: ATP synthase epsilon chain (134 aa).

Belongs to the ATPase epsilon chain family. F-type ATPases have 2 components, CF(1) - the catalytic core - and CF(0) - the membrane proton channel. CF(1) has five subunits: alpha(3), beta(3), gamma(1), delta(1), epsilon(1). CF(0) has three main subunits: a, b and c.

Its subcellular location is the cell membrane. Produces ATP from ADP in the presence of a proton gradient across the membrane. This chain is ATP synthase epsilon chain, found in Clostridium botulinum (strain Alaska E43 / Type E3).